Reading from the N-terminus, the 124-residue chain is Late embryogenesis abundant protein 37 (124 aa).

A mitochondrion-targeting transit peptide spans 1–35 (MSQSLFNLKSLSRSINNTIRMRRYIVITKASQRAY).

This sequence belongs to the LEA type 3 family.

It is found in the mitochondrion. The sequence is that of Late embryogenesis abundant protein 37 from Arabidopsis thaliana (Mouse-ear cress).